Here is a 172-residue protein sequence, read N- to C-terminus: Large ribosomal subunit protein bL17 (172 aa).

Positions 153 to 172 (AQAAEPVAAAEPATPATTAG) are disordered.

It belongs to the bacterial ribosomal protein bL17 family. As to quaternary structure, part of the 50S ribosomal subunit. Contacts protein L32.

The protein is Large ribosomal subunit protein bL17 of Sorangium cellulosum (strain So ce56) (Polyangium cellulosum (strain So ce56)).